A 166-amino-acid polypeptide reads, in one-letter code: Crossover junction endodeoxyribonuclease RuvC (166 aa).

Active-site residues include D7, E67, and D140. 3 residues coordinate Mg(2+): D7, E67, and D140.

Belongs to the RuvC family. In terms of assembly, homodimer which binds Holliday junction (HJ) DNA. The HJ becomes 2-fold symmetrical on binding to RuvC with unstacked arms; it has a different conformation from HJ DNA in complex with RuvA. In the full resolvosome a probable DNA-RuvA(4)-RuvB(12)-RuvC(2) complex forms which resolves the HJ. The cofactor is Mg(2+).

It is found in the cytoplasm. It carries out the reaction Endonucleolytic cleavage at a junction such as a reciprocal single-stranded crossover between two homologous DNA duplexes (Holliday junction).. Its function is as follows. The RuvA-RuvB-RuvC complex processes Holliday junction (HJ) DNA during genetic recombination and DNA repair. Endonuclease that resolves HJ intermediates. Cleaves cruciform DNA by making single-stranded nicks across the HJ at symmetrical positions within the homologous arms, yielding a 5'-phosphate and a 3'-hydroxyl group; requires a central core of homology in the junction. The consensus cleavage sequence is 5'-(A/T)TT(C/G)-3'. Cleavage occurs on the 3'-side of the TT dinucleotide at the point of strand exchange. HJ branch migration catalyzed by RuvA-RuvB allows RuvC to scan DNA until it finds its consensus sequence, where it cleaves and resolves the cruciform DNA. In Ruminiclostridium cellulolyticum (strain ATCC 35319 / DSM 5812 / JCM 6584 / H10) (Clostridium cellulolyticum), this protein is Crossover junction endodeoxyribonuclease RuvC.